The chain runs to 346 residues: N-acetyl-gamma-glutamyl-phosphate reductase (346 aa).

The active site involves Cys-149.

This sequence belongs to the NAGSA dehydrogenase family. Type 1 subfamily.

It localises to the cytoplasm. The catalysed reaction is N-acetyl-L-glutamate 5-semialdehyde + phosphate + NADP(+) = N-acetyl-L-glutamyl 5-phosphate + NADPH + H(+). The protein operates within amino-acid biosynthesis; L-arginine biosynthesis; N(2)-acetyl-L-ornithine from L-glutamate: step 3/4. Its function is as follows. Catalyzes the NADPH-dependent reduction of N-acetyl-5-glutamyl phosphate to yield N-acetyl-L-glutamate 5-semialdehyde. The sequence is that of N-acetyl-gamma-glutamyl-phosphate reductase from Geotalea daltonii (strain DSM 22248 / JCM 15807 / FRC-32) (Geobacter daltonii).